A 96-amino-acid polypeptide reads, in one-letter code: MKRILLALLRIYKIALSPYLGSQCRFLPTCSDYARDAIVQHGAARGTWMAACRLCRCHPFTKGGYDPVPATHGTAAAPPASAAPGRPPVTVRLPRP.

The span at 71–84 shows a compositional bias: low complexity; that stretch reads THGTAAAPPASAAP. The tract at residues 71–96 is disordered; the sequence is THGTAAAPPASAAPGRPPVTVRLPRP.

This sequence belongs to the UPF0161 family.

The protein resides in the cell inner membrane. In terms of biological role, could be involved in insertion of integral membrane proteins into the membrane. The chain is Putative membrane protein insertion efficiency factor from Cupriavidus metallidurans (strain ATCC 43123 / DSM 2839 / NBRC 102507 / CH34) (Ralstonia metallidurans).